Reading from the N-terminus, the 372-residue chain is Proline-rich P65 protein homolog (372 aa).

The segment covering 1–37 has biased composition (low complexity); that stretch reads MEKNRSAFQQNQQASNQPFNQDQNQYYQDPNQQQFNQ. The segment at 1 to 100 is disordered; that stretch reads MEKNRSAFQQ…GFDPNQQYYQ (100 aa). Repeat copies occupy residues 29 to 40, 41 to 52, 53 to 60, 61 to 72, 73 to 80, 81 to 92, 93 to 100, 101 to 112, 113 to 119, 120 to 131, 132 to 138, 139 to 150, and 151 to 162. A compositionally biased stretch (polar residues) spans 38–49; it reads SGFDPNQQQFNQ. The span at 53 to 100 shows a compositional bias: low complexity; it reads DPNQQYYQDPNQQQFNQAGFDQNQQYYQDPNQQQFNQPGFDPNQQYYQ. The interval 122–150 is disordered; sequence NQQQFNQSGFDQNQYYQDPNQQQFNQPSF.

This Mycoplasma genitalium (strain ATCC 33530 / DSM 19775 / NCTC 10195 / G37) (Mycoplasmoides genitalium) protein is Proline-rich P65 protein homolog.